A 440-amino-acid polypeptide reads, in one-letter code: Integral membrane protein GPR180 (440 aa).

Positions 1–22 (MGGLRLLAVALTCCWWPQGSQG) are cleaved as a signal peptide. Residues Asn105 and Asn110 are each glycosylated (N-linked (GlcNAc...) asparagine). 7 consecutive transmembrane segments (helical) span residues 173–193 (FFFL…QSLW), 202–222 (MHMI…SALA), 249–269 (IASQ…WTIV), 284–304 (TPAS…LLLW), 321–341 (LAGI…GCGL), 360–380 (FAKG…ISVI), and 389–409 (VITI…YRLF).

The protein resides in the membrane. The chain is Integral membrane protein GPR180 (GPR180) from Homo sapiens (Human).